A 448-amino-acid chain; its full sequence is Packaging protein 1 (448 aa).

The tract at residues 1–76 (METKGRRSAA…SQPAKRGGLL (76 aa)) is disordered. The span at 22–31 (PRKRPTRRAP) shows a compositional bias: basic residues. Polar residues predominate over residues 56-67 (RPSSDSLLQEPS). 171 to 178 (GPTGCGKS) contributes to the ATP binding site. The interval 440–448 (RAYRARKIK) is DNA-binding.

The protein belongs to the adenoviridae packaging protein 1 family. In terms of assembly, homodimer. Part of a genome packaging complex composed of packaging proteins 1, 2 and 3; this complex specifically binds to the packaging sequence on the left end of viral genomic DNA and performs packaging of the viral genome. Interacts with protein 33K.

The protein resides in the virion. It localises to the host nucleus. Its subcellular location is the host nucleoplasm. The protein localises to the host nucleolus. Functionally, component of the packaging machinery which encapsidates the viral DNA into preformed capsids and transcriptional activator of the viral major late promoter (MLP). Binds, along with packaging proteins 2 and 3, to the specific packaging sequence on the left end of viral genomic DNA and displays ATPase activity thereby providing the power stroke of the packaging machinery. The activity of packaging protein IVa2 is stimulated by protein 33K which acts as a terminase. May be the protein that pumps DNA into the capsid powered by ATP hydrolysis. Specifically binds to the 5'-CG-3' nucleotides of the repeats making up the packaging sequence. Component of the DEF-A and DEF-B transcription factors that bind downstream elements of the major late promoter (MLP), and stimulate transcription from the MLP after initiation of viral DNA replication. DEF-A is a heterodimer packaging proteins 1 and 2 and DEF-B is a homodimer of packaging protein 1. This chain is Packaging protein 1, found in Human adenovirus B serotype 7 (HAdV-7).